The chain runs to 535 residues: Formate--tetrahydrofolate ligase (535 aa).

50–57 (TPAGEGKT) is a binding site for ATP.

Belongs to the formate--tetrahydrofolate ligase family.

It carries out the reaction (6S)-5,6,7,8-tetrahydrofolate + formate + ATP = (6R)-10-formyltetrahydrofolate + ADP + phosphate. Its pathway is one-carbon metabolism; tetrahydrofolate interconversion. In Picrophilus torridus (strain ATCC 700027 / DSM 9790 / JCM 10055 / NBRC 100828 / KAW 2/3), this protein is Formate--tetrahydrofolate ligase.